A 337-amino-acid polypeptide reads, in one-letter code: Transaldolase (337 aa).

At K115 the chain carries N6-acetyllysine. The active-site Schiff-base intermediate with substrate is K142. K219 carries the post-translational modification N6-acetyllysine. 2 positions are modified to phosphoserine: S237 and S256. 3 positions are modified to N6-acetyllysine: K269, K286, and K321.

Belongs to the transaldolase family. Type 1 subfamily. In terms of assembly, homodimer.

It localises to the cytoplasm. The enzyme catalyses D-sedoheptulose 7-phosphate + D-glyceraldehyde 3-phosphate = D-erythrose 4-phosphate + beta-D-fructose 6-phosphate. It participates in carbohydrate degradation; pentose phosphate pathway; D-glyceraldehyde 3-phosphate and beta-D-fructose 6-phosphate from D-ribose 5-phosphate and D-xylulose 5-phosphate (non-oxidative stage): step 2/3. Its function is as follows. Transaldolase is important for the balance of metabolites in the pentose-phosphate pathway. The chain is Transaldolase (TALDO1) from Bos taurus (Bovine).